The chain runs to 358 residues: Phospho-N-acetylmuramoyl-pentapeptide-transferase (358 aa).

The next 10 membrane-spanning stretches (helical) occupy residues 27–47, 73–93, 97–117, 134–154, 170–190, 197–217, 233–253, 261–281, 286–306, and 335–355; these read IYAM…VIRV, TMGG…WADL, YIWT…VDDY, MFWQ…KPGF, LWFW…NAVN, GLAI…SYVA, GAGE…GFLW, VFMG…IAVI, ILLV…IFQV, and KIIV…ISTL.

This sequence belongs to the glycosyltransferase 4 family. MraY subfamily. Mg(2+) is required as a cofactor.

Its subcellular location is the cell inner membrane. It carries out the reaction UDP-N-acetyl-alpha-D-muramoyl-L-alanyl-gamma-D-glutamyl-meso-2,6-diaminopimeloyl-D-alanyl-D-alanine + di-trans,octa-cis-undecaprenyl phosphate = di-trans,octa-cis-undecaprenyl diphospho-N-acetyl-alpha-D-muramoyl-L-alanyl-D-glutamyl-meso-2,6-diaminopimeloyl-D-alanyl-D-alanine + UMP. It participates in cell wall biogenesis; peptidoglycan biosynthesis. Its function is as follows. Catalyzes the initial step of the lipid cycle reactions in the biosynthesis of the cell wall peptidoglycan: transfers peptidoglycan precursor phospho-MurNAc-pentapeptide from UDP-MurNAc-pentapeptide onto the lipid carrier undecaprenyl phosphate, yielding undecaprenyl-pyrophosphoryl-MurNAc-pentapeptide, known as lipid I. This is Phospho-N-acetylmuramoyl-pentapeptide-transferase from Pelobacter propionicus (strain DSM 2379 / NBRC 103807 / OttBd1).